The following is a 1011-amino-acid chain: Protein translocase subunit SecA, chloroplastic (1011 aa).

A compositionally biased stretch (polar residues) spans Met-1 to Pro-17. The disordered stretch occupies residues Met-1–His-22. A chloroplast-targeting transit peptide spans Met-1–Val-59. Met-164–Thr-171 is a binding site for ATP. The segment at Gln-976–Ser-1011 is disordered.

It belongs to the SecA family.

Its subcellular location is the plastid. The protein localises to the chloroplast stroma. The protein resides in the chloroplast thylakoid membrane. It carries out the reaction ATP + H2O + chloroplast-proteinSide 1 = ADP + phosphate + chloroplast-proteinSide 2.. Has a central role in coupling the hydrolysis of ATP to the transfer of proteins across the thylakoid membrane. Facilitates the transport of precursor proteins from the chloroplast stroma to thylakoid lumen. In Pisum sativum (Garden pea), this protein is Protein translocase subunit SecA, chloroplastic.